The sequence spans 186 residues: ATP synthase subunit delta, chloroplastic (186 aa).

This sequence belongs to the ATPase delta chain family. F-type ATPases have 2 components, F(1) - the catalytic core - and F(0) - the membrane proton channel. F(1) has five subunits: alpha(3), beta(3), gamma(1), delta(1), epsilon(1). CF(0) has four main subunits: a(1), b(1), b'(1) and c(10-14). The alpha and beta chains form an alternating ring which encloses part of the gamma chain. F(1) is attached to F(0) by a central stalk formed by the gamma and epsilon chains, while a peripheral stalk is formed by the delta, b and b' chains.

The protein resides in the plastid. It is found in the chloroplast thylakoid membrane. Its function is as follows. F(1)F(0) ATP synthase produces ATP from ADP in the presence of a proton or sodium gradient. F-type ATPases consist of two structural domains, F(1) containing the extramembraneous catalytic core and F(0) containing the membrane proton channel, linked together by a central stalk and a peripheral stalk. During catalysis, ATP synthesis in the catalytic domain of F(1) is coupled via a rotary mechanism of the central stalk subunits to proton translocation. Functionally, this protein is part of the stalk that links CF(0) to CF(1). It either transmits conformational changes from CF(0) to CF(1) or is implicated in proton conduction. This chain is ATP synthase subunit delta, chloroplastic, found in Porphyra purpurea (Red seaweed).